We begin with the raw amino-acid sequence, 387 residues long: Phosphoglycerate kinase (387 aa).

Residues 21-23, R36, 59-62, R113, and R146 each bind substrate; these read DLN and HLGR. Residues K197, E314, and 340-343 each bind ATP; that span reads GGDT.

It belongs to the phosphoglycerate kinase family. In terms of assembly, monomer.

It is found in the cytoplasm. It carries out the reaction (2R)-3-phosphoglycerate + ATP = (2R)-3-phospho-glyceroyl phosphate + ADP. Its pathway is carbohydrate degradation; glycolysis; pyruvate from D-glyceraldehyde 3-phosphate: step 2/5. The chain is Phosphoglycerate kinase from Pseudomonas fluorescens (strain Pf0-1).